Reading from the N-terminus, the 497-residue chain is Protein DETOXIFICATION 25 (497 aa).

12 helical membrane passes run 43–63 (LPST…QAFI), 70–90 (GLAA…GIMA), 121–141 (IVDT…GPIL), 157–177 (IYPW…MQMY), 186–206 (IIGI…WWCV), 216–236 (ALLG…VYVF), 261–281 (LSIS…IIVL), 291–311 (IAIS…NICF), 339–359 (VVLV…LAFG), 381–401 (IVLS…GVAI), 416–436 (SYYA…NFGI), and 438–458 (GLWS…CYVI).

This sequence belongs to the multi antimicrobial extrusion (MATE) (TC 2.A.66.1) family.

The protein localises to the membrane. The chain is Protein DETOXIFICATION 25 from Arabidopsis thaliana (Mouse-ear cress).